We begin with the raw amino-acid sequence, 292 residues long: NAD kinase (292 aa).

The active-site Proton acceptor is the Asp73. NAD(+) contacts are provided by residues 73–74 (DG), 147–148 (NE), His158, Arg175, Asp177, 188–193 (TAYSLS), and Gln247.

The protein belongs to the NAD kinase family. A divalent metal cation is required as a cofactor.

The protein localises to the cytoplasm. The catalysed reaction is NAD(+) + ATP = ADP + NADP(+) + H(+). In terms of biological role, involved in the regulation of the intracellular balance of NAD and NADP, and is a key enzyme in the biosynthesis of NADP. Catalyzes specifically the phosphorylation on 2'-hydroxyl of the adenosine moiety of NAD to yield NADP. This Enterobacter sp. (strain 638) protein is NAD kinase.